A 450-amino-acid chain; its full sequence is Tubulin alpha chain (450 aa).

The short motif at 1 to 4 (MREC) is the MREC motif element. Glutamine 11 serves as a coordination point for GTP. An N6-acetyllysine modification is found at lysine 40. 7 residues coordinate GTP: glutamate 71, serine 140, glycine 144, threonine 145, threonine 179, asparagine 206, and asparagine 228. Mg(2+) is bound at residue glutamate 71. Glutamate 254 is an active-site residue. A 5-glutamyl polyglutamate modification is found at glutamate 444.

Belongs to the tubulin family. Dimer of alpha and beta chains. A typical microtubule is a hollow water-filled tube with an outer diameter of 25 nm and an inner diameter of 15 nM. Alpha-beta heterodimers associate head-to-tail to form protofilaments running lengthwise along the microtubule wall with the beta-tubulin subunit facing the microtubule plus end conferring a structural polarity. Microtubules usually have 13 protofilaments but different protofilament numbers can be found in some organisms and specialized cells. Requires Mg(2+) as cofactor. In terms of processing, some glutamate residues at the C-terminus are polyglycylated, resulting in polyglycine chains on the gamma-carboxyl group. Glycylation is mainly limited to tubulin incorporated into axonemes (cilia and flagella) whereas glutamylation is prevalent in neuronal cells, centrioles, axonemes, and the mitotic spindle. Both modifications can coexist on the same protein on adjacent residues, and lowering polyglycylation levels increases polyglutamylation, and reciprocally. The precise function of polyglycylation is still unclear. Some glutamate residues at the C-terminus are polyglutamylated, resulting in polyglutamate chains on the gamma-carboxyl group. Polyglutamylation plays a key role in microtubule severing by spastin (SPAST). SPAST preferentially recognizes and acts on microtubules decorated with short polyglutamate tails: severing activity by SPAST increases as the number of glutamates per tubulin rises from one to eight, but decreases beyond this glutamylation threshold. Post-translationally, acetylation of alpha chains at Lys-40 is located inside the microtubule lumen. This modification has been correlated with increased microtubule stability, intracellular transport and ciliary assembly. In terms of processing, undergoes a tyrosination/detyrosination cycle, the cyclic removal and re-addition of a C-terminal tyrosine residue by the enzymes tubulin tyrosine carboxypeptidase (MATCAP, VASH1 or VASH2) and tubulin tyrosine ligase (TTL), respectively. Tyrosination promotes microtubule interaction with CAP-Gly microtubule plus-end tracking proteins. Tyrosinated tubulins regulate the initiation of dynein-driven motility. Post-translationally, detyrosination is involved in metaphase plate congression by guiding chromosomes during mitosis. Detyrosination increases microtubules-dependent mechanotransduction in dystrophic cardiac and skeletal muscle. In cardiomyocytes, detyrosinated microtubules are required to resist to contractile compression during contraction.

It is found in the cytoplasm. It localises to the cytoskeleton. The enzyme catalyses GTP + H2O = GDP + phosphate + H(+). Tubulin is the major constituent of microtubules, a cylinder consisting of laterally associated linear protofilaments composed of alpha- and beta-tubulin heterodimers. Microtubules grow by the addition of GTP-tubulin dimers to the microtubule end, where a stabilizing cap forms. Below the cap, tubulin dimers are in GDP-bound state, owing to GTPase activity of alpha-tubulin. The chain is Tubulin alpha chain from Notophthalmus viridescens (Eastern newt).